We begin with the raw amino-acid sequence, 95 residues long: MARVTVEDAVDKVGNRFDLVLVASRRARQIATGGKDPLVDVENDKPTVIALREIEAGLITTDIMNTSDRAQQIQQDTAELDAVAAIVGGQQEELS.

It belongs to the RNA polymerase subunit omega family. As to quaternary structure, the RNAP catalytic core consists of 2 alpha, 1 beta, 1 beta' and 1 omega subunit. When a sigma factor is associated with the core the holoenzyme is formed, which can initiate transcription.

It catalyses the reaction RNA(n) + a ribonucleoside 5'-triphosphate = RNA(n+1) + diphosphate. In terms of biological role, promotes RNA polymerase assembly. Latches the N- and C-terminal regions of the beta' subunit thereby facilitating its interaction with the beta and alpha subunits. The chain is DNA-directed RNA polymerase subunit omega from Colwellia psychrerythraea (strain 34H / ATCC BAA-681) (Vibrio psychroerythus).